The sequence spans 211 residues: Ribonuclease HII (211 aa).

In terms of domain architecture, RNase H type-2 spans 24-211 (QLIAGVDEVG…KPVKKALGLD (188 aa)). A divalent metal cation is bound by residues D30, E31, and D122.

This sequence belongs to the RNase HII family. It depends on Mn(2+) as a cofactor. The cofactor is Mg(2+).

The protein localises to the cytoplasm. The catalysed reaction is Endonucleolytic cleavage to 5'-phosphomonoester.. Its function is as follows. Endonuclease that specifically degrades the RNA of RNA-DNA hybrids. The chain is Ribonuclease HII from Vibrio parahaemolyticus serotype O3:K6 (strain RIMD 2210633).